We begin with the raw amino-acid sequence, 288 residues long: 4-diphosphocytidyl-2-C-methyl-D-erythritol kinase (288 aa).

The active site involves Lys8. 92–102 (PVAAGMAGGST) contributes to the ATP binding site. Residue Asp134 is part of the active site.

Belongs to the GHMP kinase family. IspE subfamily.

It carries out the reaction 4-CDP-2-C-methyl-D-erythritol + ATP = 4-CDP-2-C-methyl-D-erythritol 2-phosphate + ADP + H(+). It functions in the pathway isoprenoid biosynthesis; isopentenyl diphosphate biosynthesis via DXP pathway; isopentenyl diphosphate from 1-deoxy-D-xylulose 5-phosphate: step 3/6. Its function is as follows. Catalyzes the phosphorylation of the position 2 hydroxy group of 4-diphosphocytidyl-2C-methyl-D-erythritol. This is 4-diphosphocytidyl-2-C-methyl-D-erythritol kinase from Clostridium perfringens (strain 13 / Type A).